Here is a 114-residue protein sequence, read N- to C-terminus: ATP synthase subunit beta, mitochondrial (114 aa).

44-51 serves as a coordination point for ATP; it reads GGAGVGKT.

Belongs to the ATPase alpha/beta chains family. As to quaternary structure, F-type ATPases have 2 components, CF(1) - the catalytic core - and CF(0) - the membrane proton channel. CF(1) has five subunits: alpha(3), beta(3), gamma(1), delta(1), epsilon(1). CF(0) has three main subunits: a, b and c.

Its subcellular location is the mitochondrion. The protein localises to the mitochondrion inner membrane. The enzyme catalyses ATP + H2O + 4 H(+)(in) = ADP + phosphate + 5 H(+)(out). Functionally, mitochondrial membrane ATP synthase (F(1)F(0) ATP synthase or Complex V) produces ATP from ADP in the presence of a proton gradient across the membrane which is generated by electron transport complexes of the respiratory chain. F-type ATPases consist of two structural domains, F(1) - containing the extramembraneous catalytic core, and F(0) - containing the membrane proton channel, linked together by a central stalk and a peripheral stalk. During catalysis, ATP synthesis in the catalytic domain of F(1) is coupled via a rotary mechanism of the central stalk subunits to proton translocation. Subunits alpha and beta form the catalytic core in F(1). Rotation of the central stalk against the surrounding alpha(3)beta(3) subunits leads to hydrolysis of ATP in three separate catalytic sites on the beta subunits. The sequence is that of ATP synthase subunit beta, mitochondrial (atp2) from Penicillium glabrum (Penicillium frequentans).